A 282-amino-acid polypeptide reads, in one-letter code: Probable endonuclease 4 (282 aa).

Positions 71, 111, 147, 181, 184, 218, 231, 233, and 263 each coordinate Zn(2+).

Belongs to the AP endonuclease 2 family. Zn(2+) serves as cofactor.

It carries out the reaction Endonucleolytic cleavage to 5'-phosphooligonucleotide end-products.. In terms of biological role, endonuclease IV plays a role in DNA repair. It cleaves phosphodiester bonds at apurinic or apyrimidinic (AP) sites, generating a 3'-hydroxyl group and a 5'-terminal sugar phosphate. The polypeptide is Probable endonuclease 4 (Protochlamydia amoebophila (strain UWE25)).